The primary structure comprises 65 residues: Large ribosomal subunit protein bL35 (65 aa).

Belongs to the bacterial ribosomal protein bL35 family.

This is Large ribosomal subunit protein bL35 from Rhodospirillum rubrum (strain ATCC 11170 / ATH 1.1.1 / DSM 467 / LMG 4362 / NCIMB 8255 / S1).